Consider the following 268-residue polypeptide: 4-hydroxy-tetrahydrodipicolinate reductase (268 aa).

NAD(+) is bound by residues 7–12 (GAGGRM) and Glu-33. Arg-34 contacts NADP(+). NAD(+) is bound by residues 97–99 (GTT) and 121–124 (SGNM). His-155 functions as the Proton donor/acceptor in the catalytic mechanism. A (S)-2,3,4,5-tetrahydrodipicolinate-binding site is contributed by His-156. The active-site Proton donor is the Lys-159. Position 165–166 (165–166 (GT)) interacts with (S)-2,3,4,5-tetrahydrodipicolinate.

It belongs to the DapB family.

It localises to the cytoplasm. The catalysed reaction is (S)-2,3,4,5-tetrahydrodipicolinate + NAD(+) + H2O = (2S,4S)-4-hydroxy-2,3,4,5-tetrahydrodipicolinate + NADH + H(+). The enzyme catalyses (S)-2,3,4,5-tetrahydrodipicolinate + NADP(+) + H2O = (2S,4S)-4-hydroxy-2,3,4,5-tetrahydrodipicolinate + NADPH + H(+). The protein operates within amino-acid biosynthesis; L-lysine biosynthesis via DAP pathway; (S)-tetrahydrodipicolinate from L-aspartate: step 4/4. Functionally, catalyzes the conversion of 4-hydroxy-tetrahydrodipicolinate (HTPA) to tetrahydrodipicolinate. The polypeptide is 4-hydroxy-tetrahydrodipicolinate reductase (Brucella melitensis biotype 1 (strain ATCC 23456 / CCUG 17765 / NCTC 10094 / 16M)).